The sequence spans 500 residues: Probable malate:quinone oxidoreductase (500 aa).

It belongs to the MQO family. It depends on FAD as a cofactor.

The catalysed reaction is (S)-malate + a quinone = a quinol + oxaloacetate. Its pathway is carbohydrate metabolism; tricarboxylic acid cycle; oxaloacetate from (S)-malate (quinone route): step 1/1. This is Probable malate:quinone oxidoreductase from Bacillus cereus (strain ZK / E33L).